Reading from the N-terminus, the 34-residue chain is Photosystem II reaction center protein M (34 aa).

Residues 7 to 27 (GFVASLMFILVPAIFLIVLYI) traverse the membrane as a helical segment.

The protein belongs to the PsbM family. PSII is composed of 1 copy each of membrane proteins PsbA, PsbB, PsbC, PsbD, PsbE, PsbF, PsbH, PsbI, PsbJ, PsbK, PsbL, PsbM, PsbT, PsbX, PsbY, PsbZ, Psb30/Ycf12, peripheral proteins PsbO, CyanoQ (PsbQ), PsbU, PsbV and a large number of cofactors. It forms dimeric complexes.

Its subcellular location is the cellular thylakoid membrane. In terms of biological role, one of the components of the core complex of photosystem II (PSII). PSII is a light-driven water:plastoquinone oxidoreductase that uses light energy to abstract electrons from H(2)O, generating O(2) and a proton gradient subsequently used for ATP formation. It consists of a core antenna complex that captures photons, and an electron transfer chain that converts photonic excitation into a charge separation. This subunit is found at the monomer-monomer interface. This is Photosystem II reaction center protein M from Synechococcus sp. (strain CC9605).